Here is a 616-residue protein sequence, read N- to C-terminus: Chaperone protein HscA (616 aa).

The protein belongs to the heat shock protein 70 family.

Its function is as follows. Chaperone involved in the maturation of iron-sulfur cluster-containing proteins. Has a low intrinsic ATPase activity which is markedly stimulated by HscB. Involved in the maturation of IscU. In Salmonella arizonae (strain ATCC BAA-731 / CDC346-86 / RSK2980), this protein is Chaperone protein HscA.